A 98-amino-acid polypeptide reads, in one-letter code: MVLAMLGALHPRAGLSLFLHLILAVALLRSQPLRSQRSVPEAFSAPLELSQPLSGLVDDYGILPKHPRPRGPRPLLSRAQQRKRDGPDLAEYYYDAHL.

Residues 13-29 (AGLSLFLHLILAVALLR) form a helical membrane-spanning segment. The tract at residues 60–87 (YGILPKHPRPRGPRPLLSRAQQRKRDGP) is disordered.

In terms of assembly, interacts with SPPL2C (via active sites); the interaction stabilizes FREY1 protein and inhibits SPPL2C proteolytic activity. Interacts with IZUMO1; the interaction retains IZUMO1 at the endoplasmic reticulum membrane and coordinates IZUMO1 complex assembly.

The protein localises to the endoplasmic reticulum membrane. Functionally, key regulator for male fertility expressed transiently in round spermatids where it recruits IZUMO1 at the endoplasmic reticulum (ER) membrane and coordinates the oolemmal binding multimeric complex (IZUMO1 complex) assembly. Upon complete assembly of the IZUMO1 complex, its ER retention is released, facilitating IZUMO1 complex export to the acrosome. Through the interaction with SPPL2C, inhibits its intramembrane protease activity directly accessing the catalytic center of an I-CLiP. In Homo sapiens (Human), this protein is Protein Frey 1.